The following is a 131-amino-acid chain: uncharacterized protein (131 aa).

2 consecutive transmembrane segments (helical) span residues 68-88 (VVRATPIIGPYAGLPVIVAPI) and 94-114 (VLGAIGVVDITAGIFEDIVAI).

It is found in the cell membrane. This is an uncharacterized protein from Methanocaldococcus jannaschii (strain ATCC 43067 / DSM 2661 / JAL-1 / JCM 10045 / NBRC 100440) (Methanococcus jannaschii).